An 889-amino-acid chain; its full sequence is Cytoplasmic aconitate hydratase (889 aa).

Substrate is bound by residues glutamine 86 and 205–207; that span reads DSH. Cysteine 437, cysteine 503, and cysteine 506 together coordinate [4Fe-4S] cluster. Residues arginine 536, arginine 541, arginine 699, and 779 to 780 each bind substrate; that span reads SR.

The protein belongs to the aconitase/IPM isomerase family. Interacts (when associated with the 4Fe-4S) with FBXL5. Interacts with frataxin(81-210). It depends on [4Fe-4S] cluster as a cofactor.

The protein resides in the cytoplasm. It is found in the cytosol. It carries out the reaction citrate = D-threo-isocitrate. Its function is as follows. Bifunctional iron sensor that switches between 2 activities depending on iron availability. Iron deprivation, promotes its mRNA binding activity through which it regulates the expression of genes involved in iron uptake, sequestration and utilization. Binds to iron-responsive elements (IRES) in the untranslated region of target mRNAs preventing for instance the translation of ferritin and aminolevulinic acid synthase and stabilizing the transferrin receptor mRNA. In terms of biological role, conversely, when cellular iron levels are high, binds a 4Fe-4S cluster which precludes RNA binding activity and promotes the aconitase activity, the isomerization of citrate to isocitrate via cis-aconitate. The chain is Cytoplasmic aconitate hydratase (ACO1) from Oryctolagus cuniculus (Rabbit).